Consider the following 78-residue polypeptide: Large ribosomal subunit protein bL28 (78 aa).

Residues 1 to 20 (MSQVCQVTGKRPVVGNNRSH) form a disordered region.

This sequence belongs to the bacterial ribosomal protein bL28 family.

The protein is Large ribosomal subunit protein bL28 of Idiomarina loihiensis (strain ATCC BAA-735 / DSM 15497 / L2-TR).